We begin with the raw amino-acid sequence, 172 residues long: Single-stranded DNA-binding protein 2 (172 aa).

One can recognise an SSB domain in the interval 6–111 (VNKVILVGHI…VIVNVGGTMQ (106 aa)). A DNA-binding region spans residues 55 to 61 (WHRVVVF). The tract at residues 113–172 (LGRHNSQPQQEPQTPPTAAKGEGKAVKGAGNAAKGKNAAAPQQPPAQPDPAYDFDDDIPF) is disordered. Over residues 119-153 (QPQQEPQTPPTAAKGEGKAVKGAGNAAKGKNAAAP) the composition is skewed to low complexity. The Important for interaction with partner proteins signature appears at 167–172 (DDDIPF).

In terms of assembly, homotetramer.

Functionally, plays an important role in DNA replication, recombination and repair. Binds to ssDNA and to an array of partner proteins to recruit them to their sites of action during DNA metabolism. In Salmonella typhimurium (strain LT2 / SGSC1412 / ATCC 700720), this protein is Single-stranded DNA-binding protein 2 (ssb2).